A 334-amino-acid chain; its full sequence is Biotin synthase (334 aa).

Positions glutamate 55–arginine 280 constitute a Radical SAM core domain. [4Fe-4S] cluster-binding residues include cysteine 70, cysteine 74, and cysteine 77. Residues cysteine 113, cysteine 205, and arginine 275 each coordinate [2Fe-2S] cluster.

Belongs to the radical SAM superfamily. Biotin synthase family. Homodimer. The cofactor is [4Fe-4S] cluster. [2Fe-2S] cluster serves as cofactor.

It carries out the reaction (4R,5S)-dethiobiotin + (sulfur carrier)-SH + 2 reduced [2Fe-2S]-[ferredoxin] + 2 S-adenosyl-L-methionine = (sulfur carrier)-H + biotin + 2 5'-deoxyadenosine + 2 L-methionine + 2 oxidized [2Fe-2S]-[ferredoxin]. It functions in the pathway cofactor biosynthesis; biotin biosynthesis; biotin from 7,8-diaminononanoate: step 2/2. In terms of biological role, catalyzes the conversion of dethiobiotin (DTB) to biotin by the insertion of a sulfur atom into dethiobiotin via a radical-based mechanism. This chain is Biotin synthase, found in Corynebacterium glutamicum (strain R).